The primary structure comprises 296 residues: NH(3)-dependent NAD(+) synthetase (296 aa).

30 to 37 (GVSGGLDS) serves as a coordination point for ATP. Aspartate 36 is a binding site for Mg(2+). Arginine 157 is a deamido-NAD(+) binding site. Position 182 (glutamate 182) interacts with Mg(2+). The deamido-NAD(+) site is built by lysine 190 and aspartate 197. ATP is bound by residues lysine 206 and serine 228.

It belongs to the NAD synthetase family. In terms of assembly, homodimer.

It carries out the reaction deamido-NAD(+) + NH4(+) + ATP = AMP + diphosphate + NAD(+) + H(+). It participates in cofactor biosynthesis; NAD(+) biosynthesis; NAD(+) from deamido-NAD(+) (ammonia route): step 1/1. In terms of biological role, catalyzes the ATP-dependent amidation of deamido-NAD to form NAD. Uses ammonia as a nitrogen source. The polypeptide is NH(3)-dependent NAD(+) synthetase (Coprothermobacter proteolyticus (strain ATCC 35245 / DSM 5265 / OCM 4 / BT)).